The following is a 517-amino-acid chain: Ribonuclease Y (517 aa).

A helical transmembrane segment spans residues 1–21 (MIESLIALIAAIVGLGIGYLV). One can recognise a KH domain in the interval 207–273 (LINVINIKND…TKVIELLVED (67 aa)). The HD domain maps to 333–426 (ALAHSLEVAH…VCAADTLSAA (94 aa)).

The protein belongs to the RNase Y family.

The protein localises to the cell membrane. Its function is as follows. Endoribonuclease that initiates mRNA decay. In Campylobacter jejuni subsp. jejuni serotype O:2 (strain ATCC 700819 / NCTC 11168), this protein is Ribonuclease Y.